A 267-amino-acid chain; its full sequence is MYADRDLPGAGGLAVRVIPCLDVDDGRVVKGVNFENLRDAGDPVELAAVYDAEGADELTFLDVTASSSGRATMLEVVRRTAEQVFIPLTVGGGVRTVADVDSLLRAGADKVAVNTAAIACLDLLADMARQFGSQCIVLSVDARTVPVGSAPTPSGWEVTTHGGRRGTGMDAVQWAARGADLGVGEILLNSMDADGTKAGFDLALLRAVRAAVTVPVIASGGAGAVEHFAPAVAAGADAVLAASVFHFRELTIGQVKAALAAEGITVR.

Catalysis depends on residues D22 and D141.

This sequence belongs to the HisA/HisF family. As to quaternary structure, heterodimer of HisH and HisF.

Its subcellular location is the cytoplasm. The catalysed reaction is 5-[(5-phospho-1-deoxy-D-ribulos-1-ylimino)methylamino]-1-(5-phospho-beta-D-ribosyl)imidazole-4-carboxamide + L-glutamine = D-erythro-1-(imidazol-4-yl)glycerol 3-phosphate + 5-amino-1-(5-phospho-beta-D-ribosyl)imidazole-4-carboxamide + L-glutamate + H(+). It functions in the pathway amino-acid biosynthesis; L-histidine biosynthesis; L-histidine from 5-phospho-alpha-D-ribose 1-diphosphate: step 5/9. Its function is as follows. IGPS catalyzes the conversion of PRFAR and glutamine to IGP, AICAR and glutamate. The HisF subunit catalyzes the cyclization activity that produces IGP and AICAR from PRFAR using the ammonia provided by the HisH subunit. This chain is Imidazole glycerol phosphate synthase subunit HisF, found in Mycobacterium bovis (strain ATCC BAA-935 / AF2122/97).